The primary structure comprises 78 residues: uncharacterized protein (78 aa).

This is an uncharacterized protein from Enterobacteria phage RB51 (Bacteriophage RB51).